Here is a 70-residue protein sequence, read N- to C-terminus: Small ribosomal subunit protein bS21 (70 aa).

This sequence belongs to the bacterial ribosomal protein bS21 family.

In Campylobacter curvus (strain 525.92), this protein is Small ribosomal subunit protein bS21.